Consider the following 66-residue polypeptide: Large ribosomal subunit protein bL35 (66 aa).

Belongs to the bacterial ribosomal protein bL35 family.

The chain is Large ribosomal subunit protein bL35 from Methylobacterium nodulans (strain LMG 21967 / CNCM I-2342 / ORS 2060).